A 462-amino-acid polypeptide reads, in one-letter code: RuvB-like 2 (462 aa).

76–83 (GQPGTGKT) contributes to the ATP binding site.

This sequence belongs to the RuvB family. Forms homohexameric rings. Can form a dodecamer with ruvbl2 made of two stacked hexameric rings. Is a component of the RNA polymerase II holoenzyme complex. Component of the chromatin-remodeling Ino80 complex. Component of some MLL1/MLL complex.

It is found in the nucleus. The protein resides in the dynein axonemal particle. The catalysed reaction is ATP + H2O = ADP + phosphate + H(+). In terms of biological role, has single-stranded DNA-stimulated ATPase and ATP-dependent DNA helicase (5' to 3') activity suggesting a role in nuclear processes such as recombination and transcription. Proposed core component of the chromatin remodeling INO80 complex which exhibits DNA- and nucleosome-activated ATPase activity and catalyzes ATP-dependent nucleosome sliding. Involved in the endoplasmic reticulum (ER)-associated degradation (ERAD) pathway where it negatively regulates expression of ER stress response genes. The protein is RuvB-like 2 (ruvbl2) of Xenopus laevis (African clawed frog).